We begin with the raw amino-acid sequence, 340 residues long: MDESKRKALENALKAIEKEFGKGAVMRLGEMPKQQVDVIPTGSLALDLALGIGGIPRGRIVEIYGPESGGKTTLALTIIAQAQRRGGVAAFVDAEHALDPLYAQRLGVQVEDLLVSQPDTGEQALEIVELLARSGAVDVIVVDSVAALVPRAEIEGEMGDQHVGLQARLMSQALRKLTAVLAKSNTAAIFINQVREKVGVTYGNPETTPGGRALKFYASVRLDVRKSGQPIKVGNEAVGVKVRVKVVKNKLAPPFREAELEIYFGRGLDPVADLVNVAVAAGVIEKAGSWFSYGELRLGQGKEKAAEALRERPELLEEIRTKVLERAGEVVLAAGEDEGE.

An ATP-binding site is contributed by glycine 65–threonine 72.

Belongs to the RecA family.

It localises to the cytoplasm. Can catalyze the hydrolysis of ATP in the presence of single-stranded DNA, the ATP-dependent uptake of single-stranded DNA by duplex DNA, and the ATP-dependent hybridization of homologous single-stranded DNAs. It interacts with LexA causing its activation and leading to its autocatalytic cleavage. The protein is Protein RecA of Thermus thermophilus (strain ATCC BAA-163 / DSM 7039 / HB27).